A 646-amino-acid chain; its full sequence is Lipoteichoic acid synthase (646 aa).

Topologically, residues 1–7 are cytoplasmic; it reads MSLPKKK. The chain crosses the membrane as a helical span at residues 8 to 28; that stretch reads IGIFAFFLLTVFTITLKTYFS. The Extracellular segment spans residues 29–43; it reads YYVDFSLGVKGLVQN. The helical transmembrane segment at 44-64 threads the bilayer; the sequence is LILIMNPYSLIALVLSVFLFF. Residues 65-68 lie on the Cytoplasmic side of the membrane; sequence KGKK. Residues 69 to 89 form a helical membrane-spanning segment; sequence AFWFIFIGGFLLTFLLYANVV. The Extracellular segment spans residues 90–119; sequence YFRFFSDFLTFSTLNQAGNVESMGGAVSAS. The chain crosses the membrane as a helical span at residues 120–140; sequence FKWYDFVYFIDTIIYLAILIF. Residues 141-153 are Cytoplasmic-facing; the sequence is KRKWLDNRAFSKK. Residues 154 to 174 traverse the membrane as a helical segment; that stretch reads FVPVVMATSVALFFLNLAFAE. Residues 175-646 are Extracellular-facing; sequence TDRPELLTRT…KSGPKGNEKK (472 aa). Glutamate 255 and threonine 300 together coordinate Mn(2+). Threonine 300 is a catalytic residue. Histidine 416 is a binding site for substrate. Residues aspartate 475 and histidine 476 each contribute to the Mn(2+) site.

This sequence belongs to the LTA synthase family. Post-translationally, proteolytically cleaved.

The protein localises to the cell membrane. The protein resides in the secreted. Its pathway is cell wall biogenesis; lipoteichoic acid biosynthesis. Functionally, catalyzes the polymerization of lipoteichoic acid (LTA) polyglycerol phosphate, a reaction that presumably uses phosphatidylglycerol (PG) as substrate. Is required for staphylococcal growth and cell division process. This chain is Lipoteichoic acid synthase (ltaS), found in Staphylococcus epidermidis (strain ATCC 12228 / FDA PCI 1200).